The following is a 1912-amino-acid chain: MRGLISALVLTLVGSQHLNYQPDFGENKVYTYNYESILFSGIPEKGLARTGIRIRSEVEISGIGPKLCLIRIHSIEAAEYNGIWPTSSFSRSLKLTQALTGQLSIPIKFEYSNGHVGNLMAPDSVSDDGLNIYRGILNILELSLKKMQHSYSIQEAGIGGICNTTYAIQENKKANLVDVTKSKDLNSCEEKVQVVTGSAYTQPCQTCQQRNKNSRATATYNYKIKYTHNEAVITQAEVEEVHQFTPFHEITGGNAIVEARQKLALIEVQKQVAEVPPKEFQKRGSLQYQFGSELLQLPVHLFKIKDVERQIEERLQDLVETTYEQLPSDAPAKALKLMHLLRAANEENYESVWKQFSSRPAYRRYLLDLLPAAASHRSLRFLRHKMERQELTNWEIAQTVLVALHSSSPTQEVMEEATLIVKKHCPRSSSVLRKVCLLSYASLCHKRCSSPYSCSECLQVFHVFAGEALGKSNIEEVLLALKALGNVGHPASIKHIKKFLPGYAAGASELPLKVHETAVMALKSIGMRDPQMVQAITLEIFLNHKIHPRIRMLAAVVLLETKPGLPILMILVDAVLKEPSMQVASFIYSHLRALGRSTAPDLQMMASACRMAVRALSPKFDRSGYQFSKVFRFSMFKEFLMSGLAAKYFVLNNAGSLIPTMAVSQLRTHFLGRVADPIEVGIAAEGLQEMFVRGYSPDKDWETNYDFREILKKLSDWKALPRDKPFASGYLKMFGQELLFGRLDKDTLQNVLQVWYGPDEKIPSIRRLISSLQTGIGRQWTKALLLSEIRCIVPTCVGFPMETSFYYSSVTKVAGNVQAQITPSPRSDFRLTELLNSNVRLRSKMSLSMAKHMTFVIGINTNMIQAGLEAHTKVNAHVPVNVVATIQMKEKSIKAEIPPCKEETNLIIVSSKTFAVTRNIEDLAASKMTPVLLPEAVPDIMKMSFDSDSASGETDNIRDRQSVEDVSSGNSFSFGHPSSGKEPFIQSMCSNASTFGVQVCIEKKSVHAAFIRNVPLYNAIGEHALRMSFKPVYSDVPIEKIQVTIQAGDQAPTKMVRLVTFEDPERQESSRKEVMKRVKKILDDTDNQATRNSRSSSSSASSISESSESTTSTPSSSDSDNRASQGDPQINLKSRQSKANEKKFYPFGDSSSSGSSSSSSSSSSSSSDSSSSSRSSSSSDSSSSSSSSSSSSSSKSKSSSRSSKSNRSSSSSNSKDSSSSSSKSNSKGSSSSSSKASGTRQKAKKQSKTTSFPHASAAEGERSVHEQKQETQSSSSSSSRASSNSRSTSSSTSSSSESSGVSHRQWKQDREAETKRVKSQFNSHSSYDIPNEWETYLPKVYRLRFRSAHTHWHSGHRTSSSSSSSSSESGSSHSNSSSSDSSSRRSHMSDSSSSSSSHRHGEKAAHSSRRSPTSRAASAHHRPGSSLTRERNFLGDVIPPGITIVAQAVRSDNRNQGYQATAYVRSDAAKVDVQLVVVQLAETNWKACADAVILPLKAQARMRWGKECRDYRIAALATTGQMARKLAVQLKVQWGIIPSWIKKTSTALMRYVPGVALVLGFSEAHQRNPSRELIVRAVATSPRSIDTVIKVPGVTLYYQGLRVPFTLALGASSSSYETRDITAWNFLPEIASQIAQEDQSTCEVSKGDFKTFDRMSFTCSFNKSCNVVVAQDCTEHPKFIITTRKVDHQSLSREVHINTSSANITICPAADSSLLVTCNKESVLSDSGVSEYEKDNIKIYKNGKTVIVEAPIHGLKNVNFDGEILKVTVASWMRGKTCGVCGNNDREKHNELLMPNHKLAHSCSAFVHSWVLLEETCSGGCKLQRRYVKLNRNPTIDGEESTCYSVDPVLKCMKDCTPIEKTSVKVGFHCFPKATAVSLLEWQRSSDKKSASEDVVESVDADIDCTCTGDCS.

The N-terminal stretch at 1 to 15 (MRGLISALVLTLVGS) is a signal peptide. Positions 24–663 (FGENKVYTYN…AGSLIPTMAV (640 aa)) constitute a Vitellogenin domain. A glycan (N-linked (GlcNAc...) asparagine) is linked at N163. A disordered region spans residues 948-972 (DSASGETDNIRDRQSVEDVSSGNSF). A glycan (N-linked (GlcNAc...) asparagine) is linked at N991. 2 disordered regions span residues 1080 to 1329 (KILD…SYDI) and 1351 to 1432 (HWHS…RERN). Low complexity-rich tracts occupy residues 1092-1124 (NSRS…NRAS) and 1150-1235 (SSSS…SSSK). N-linked (GlcNAc...) asparagine glycosylation is present at N1206. Basic and acidic residues predominate over residues 1259 to 1269 (EGERSVHEQKQ). Over residues 1273–1299 (SSSSSSSRASSNSRSTSSSTSSSSESS) the composition is skewed to low complexity. Residues 1306–1316 (WKQDREAETKR) show a composition bias toward basic and acidic residues. Polar residues predominate over residues 1319 to 1328 (SQFNSHSSYD). A compositionally biased stretch (low complexity) spans 1357 to 1381 (RTSSSSSSSSSESGSSHSNSSSSDS). N1375 is a glycosylation site (N-linked (GlcNAc...) asparagine). Basic residues predominate over residues 1397-1409 (SHRHGEKAAHSSR). In terms of domain architecture, VWFD spans 1640-1818 (STCEVSKGDF…SWVLLEETCS (179 aa)). Disulfide bonds link C1642-C1781 and C1665-C1817. N-linked (GlcNAc...) asparagine glycans are attached at residues N1662, N1698, and N1703.

In terms of processing, phosvitin, an egg yolk storage protein, is one of the most highly phosphorylated (10%) proteins in nature. Post-translationally, cathepsin D is responsible for intraoocytic processing of vitellogenin. May contain intrachain disulfide bonds. As to expression, produced by the liver, secreted into the blood and then sequestered by receptor mediated endocytosis into growing oocytes, where it is generally cleaved, giving rise to the respective yolk components.

Precursor of the egg-yolk proteins that are sources of nutrients during early development of oviparous organisms. Its function is as follows. Phosvitin is believed to be of importance in sequestering calcium, iron and other cations for the developing embryo. In Gallus gallus (Chicken), this protein is Vitellogenin-1 (VTG1).